We begin with the raw amino-acid sequence, 876 residues long: uncharacterized protein (876 aa).

Over residues 37–48 (DEDKSNNDDRRS) the composition is skewed to basic and acidic residues. Disordered regions lie at residues 37 to 67 (DEDKSNNDDRRSLASILDSSSSVKKKGKGSN), 112 to 155 (DESG…RNIK), 226 to 254 (KKKSSEGATPTIKFNPPIEDGFTPLTKSQ), and 330 to 353 (MMMDDSRSVSSARRSRSRSRSRSI). A phosphoserine mark is found at Ser48 and Ser51. Over residues 49-58 (LASILDSSSS) the composition is skewed to low complexity. Over residues 115 to 131 (GFTSDNNADYFSGNSYS) the composition is skewed to polar residues. Phosphoserine is present on residues Ser360, Ser510, Ser552, and Ser577. The tract at residues 490 to 513 (PEVTKQKNTSGPKPGFSHSKSADA) is disordered. 2 disordered regions span residues 661–728 (ITGG…RSPQ) and 750–876 (RHSL…FGRL). Positions 689–699 (SKSKSRSSSKS) are enriched in basic residues. Low complexity predominate over residues 717–726 (SSASASRSRS). Ser775 is modified (phosphoserine). Low complexity-rich tracts occupy residues 794–808 (NKDSSLRKVSSSSSL) and 842–854 (FSFFKSKSRSPSS).

This is an uncharacterized protein from Saccharomyces cerevisiae (strain ATCC 204508 / S288c) (Baker's yeast).